We begin with the raw amino-acid sequence, 191 residues long: Elongation factor P 1 (191 aa).

This sequence belongs to the elongation factor P family.

It is found in the cytoplasm. The protein operates within protein biosynthesis; polypeptide chain elongation. In terms of biological role, involved in peptide bond synthesis. Stimulates efficient translation and peptide-bond synthesis on native or reconstituted 70S ribosomes in vitro. Probably functions indirectly by altering the affinity of the ribosome for aminoacyl-tRNA, thus increasing their reactivity as acceptors for peptidyl transferase. The sequence is that of Elongation factor P 1 from Lactobacillus acidophilus (strain ATCC 700396 / NCK56 / N2 / NCFM).